The sequence spans 162 residues: Small ribosomal subunit protein uS9 (162 aa).

This sequence belongs to the universal ribosomal protein uS9 family.

The protein is Small ribosomal subunit protein uS9 of Parvibaculum lavamentivorans (strain DS-1 / DSM 13023 / NCIMB 13966).